Reading from the N-terminus, the 75-residue chain is Dermaseptin-DA2 (75 aa).

An N-terminal signal peptide occupies residues 1–22 (MALVKKSLFLVLFLGLVSLSIC). The propeptide occupies 23–42 (EEKRENEDEEEQEDDEQSEE).

This sequence belongs to the frog skin active peptide (FSAP) family. Dermaseptin subfamily. In terms of tissue distribution, expressed by the skin glands.

Its subcellular location is the secreted. In terms of biological role, possesses a potent antimicrobial activity against Gram-positive and Gram-negative bacteria. Probably acts by disturbing membrane functions with its amphipathic structure. The protein is Dermaseptin-DA2 of Agalychnis dacnicolor (Giant Mexican leaf frog).